Reading from the N-terminus, the 424-residue chain is Enolase (424 aa).

Position 163 (Gln163) interacts with (2R)-2-phosphoglycerate. The active-site Proton donor is Glu204. The Mg(2+) site is built by Asp241, Glu284, and Asp311. Positions 336, 365, 366, and 387 each coordinate (2R)-2-phosphoglycerate. The active-site Proton acceptor is Lys336.

Belongs to the enolase family. It depends on Mg(2+) as a cofactor.

The protein localises to the cytoplasm. It is found in the secreted. It localises to the cell surface. The catalysed reaction is (2R)-2-phosphoglycerate = phosphoenolpyruvate + H2O. Its pathway is carbohydrate degradation; glycolysis; pyruvate from D-glyceraldehyde 3-phosphate: step 4/5. Its function is as follows. Catalyzes the reversible conversion of 2-phosphoglycerate (2-PG) into phosphoenolpyruvate (PEP). It is essential for the degradation of carbohydrates via glycolysis. In Dictyoglomus turgidum (strain DSM 6724 / Z-1310), this protein is Enolase.